The sequence spans 94 residues: DNA-directed RNA polymerase subunit omega (94 aa).

This sequence belongs to the RNA polymerase subunit omega family. As to quaternary structure, the RNAP catalytic core consists of 2 alpha, 1 beta, 1 beta' and 1 omega subunit. When a sigma factor is associated with the core the holoenzyme is formed, which can initiate transcription.

It carries out the reaction RNA(n) + a ribonucleoside 5'-triphosphate = RNA(n+1) + diphosphate. In terms of biological role, promotes RNA polymerase assembly. Latches the N- and C-terminal regions of the beta' subunit thereby facilitating its interaction with the beta and alpha subunits. In Parafrankia sp. (strain EAN1pec), this protein is DNA-directed RNA polymerase subunit omega.